We begin with the raw amino-acid sequence, 182 residues long: Protein Syd (182 aa).

The protein belongs to the Syd family.

It localises to the cell inner membrane. Functionally, interacts with the SecY protein in vivo. May bind preferentially to an uncomplexed state of SecY, thus functioning either as a chelating agent for excess SecY in the cell or as a regulatory factor that negatively controls the translocase function. This Aliivibrio salmonicida (strain LFI1238) (Vibrio salmonicida (strain LFI1238)) protein is Protein Syd.